We begin with the raw amino-acid sequence, 402 residues long: TBC1 domain family member 20 (402 aa).

A disordered region spans residues 1 to 27 (MALRPSKGDGSAGRWDRGAGKADFNAK). The segment covering 14-26 (RWDRGAGKADFNA) has biased composition (basic and acidic residues). Residues 59–245 (LLTDEIRCQV…RLYDFFLACH (187 aa)) form the Rab-GAP TBC domain. Helical transmembrane passes span 237–257 (LYDF…AVIV) and 366–386 (FVKL…LAVV).

It localises to the membrane. Functionally, GTPase-activating protein specific for Rab1 and Rab2 small GTPase families for which it can accelerate the intrinsic GTP hydrolysis rate by more than five orders of magnitude. Also shows GAP activity for RAB18 GTPase. Promotes RAB18 dissociation from the endoplasmic reticulum (ER) membrane into the cytosol, probably through stimulating RAB18 GTP-hydrolysis. Involved in maintaining endoplasmic reticulum structure. The polypeptide is TBC1 domain family member 20 (Mus musculus (Mouse)).